A 193-amino-acid polypeptide reads, in one-letter code: Potassium-transporting ATPase KdpC subunit (193 aa).

The chain crosses the membrane as a helical span at residues 14-34; that stretch reads ITFTFLVLCGLVYPLIVTGIA.

This sequence belongs to the KdpC family. The system is composed of three essential subunits: KdpA, KdpB and KdpC.

It is found in the cell membrane. Part of the high-affinity ATP-driven potassium transport (or Kdp) system, which catalyzes the hydrolysis of ATP coupled with the electrogenic transport of potassium into the cytoplasm. This subunit acts as a catalytic chaperone that increases the ATP-binding affinity of the ATP-hydrolyzing subunit KdpB by the formation of a transient KdpB/KdpC/ATP ternary complex. In Bacillus cereus (strain ATCC 10987 / NRS 248), this protein is Potassium-transporting ATPase KdpC subunit.